Reading from the N-terminus, the 884-residue chain is Alanine--tRNA ligase (884 aa).

Positions 572, 576, 673, and 677 each coordinate Zn(2+).

Belongs to the class-II aminoacyl-tRNA synthetase family. Zn(2+) is required as a cofactor.

It is found in the cytoplasm. The catalysed reaction is tRNA(Ala) + L-alanine + ATP = L-alanyl-tRNA(Ala) + AMP + diphosphate. In terms of biological role, catalyzes the attachment of alanine to tRNA(Ala) in a two-step reaction: alanine is first activated by ATP to form Ala-AMP and then transferred to the acceptor end of tRNA(Ala). Also edits incorrectly charged Ser-tRNA(Ala) and Gly-tRNA(Ala) via its editing domain. This Xylella fastidiosa (strain 9a5c) protein is Alanine--tRNA ligase.